Here is a 218-residue protein sequence, read N- to C-terminus: GTP cyclohydrolase 1 (218 aa).

Zn(2+) contacts are provided by Cys107, His110, and Cys178.

It belongs to the GTP cyclohydrolase I family. Homomer.

The catalysed reaction is GTP + H2O = 7,8-dihydroneopterin 3'-triphosphate + formate + H(+). Its pathway is cofactor biosynthesis; 7,8-dihydroneopterin triphosphate biosynthesis; 7,8-dihydroneopterin triphosphate from GTP: step 1/1. The chain is GTP cyclohydrolase 1 from Azorhizobium caulinodans (strain ATCC 43989 / DSM 5975 / JCM 20966 / LMG 6465 / NBRC 14845 / NCIMB 13405 / ORS 571).